We begin with the raw amino-acid sequence, 160 residues long: Cytochrome b6-f complex subunit 4 (160 aa).

Helical transmembrane passes span 36–56 (LLYI…GLAV), 95–115 (LLGV…PFLE), and 131–151 (TVFL…ALPI).

Belongs to the cytochrome b family. PetD subfamily. The 4 large subunits of the cytochrome b6-f complex are cytochrome b6, subunit IV (17 kDa polypeptide, petD), cytochrome f and the Rieske protein, while the 4 small subunits are petG, petL, petM and petN. The complex functions as a dimer.

It is found in the plastid. The protein localises to the chloroplast thylakoid membrane. In terms of biological role, component of the cytochrome b6-f complex, which mediates electron transfer between photosystem II (PSII) and photosystem I (PSI), cyclic electron flow around PSI, and state transitions. In Chara vulgaris (Common stonewort), this protein is Cytochrome b6-f complex subunit 4.